The primary structure comprises 270 residues: DNA-directed RNA polymerase subunit Rpo3 (270 aa).

The [3Fe-4S] cluster site is built by Cys206, Cys209, and Cys212.

This sequence belongs to the archaeal Rpo3/eukaryotic RPB3 RNA polymerase subunit family. In terms of assembly, part of the RNA polymerase complex. [3Fe-4S] cluster serves as cofactor.

The protein resides in the cytoplasm. The enzyme catalyses RNA(n) + a ribonucleoside 5'-triphosphate = RNA(n+1) + diphosphate. Functionally, DNA-dependent RNA polymerase (RNAP) catalyzes the transcription of DNA into RNA using the four ribonucleoside triphosphates as substrates. The chain is DNA-directed RNA polymerase subunit Rpo3 from Methanosphaera stadtmanae (strain ATCC 43021 / DSM 3091 / JCM 11832 / MCB-3).